A 73-amino-acid chain; its full sequence is Translation initiation factor IF-1 (73 aa).

One can recognise an S1-like domain in the interval 1–73 (MAKKDGVIEI…TRGRIVYRYK (73 aa)).

It belongs to the IF-1 family. In terms of assembly, component of the 30S ribosomal translation pre-initiation complex which assembles on the 30S ribosome in the order IF-2 and IF-3, IF-1 and N-formylmethionyl-tRNA(fMet); mRNA recruitment can occur at any time during PIC assembly.

The protein localises to the cytoplasm. Its function is as follows. One of the essential components for the initiation of protein synthesis. Stabilizes the binding of IF-2 and IF-3 on the 30S subunit to which N-formylmethionyl-tRNA(fMet) subsequently binds. Helps modulate mRNA selection, yielding the 30S pre-initiation complex (PIC). Upon addition of the 50S ribosomal subunit IF-1, IF-2 and IF-3 are released leaving the mature 70S translation initiation complex. This Arthrobacter sp. (strain FB24) protein is Translation initiation factor IF-1.